A 172-amino-acid chain; its full sequence is MLKIVTRAGHTARISNIAAHLLRTSPSLLTRTTTTTRFLPFSTSSFLNHGHLKKPKPGEELKITFILKDGSQKTYEVCEGETILDIAQGHNLDMEGACGGSCACSTCHVIVDPDYYDALPEPEDDENDMLDLAYGLTETSRLGCQIKMSKDIDGIRVALPQMTRNVNNNDFS.

A mitochondrion-targeting transit peptide spans 1 to 16 (MLKIVTRAGHTARISN). In terms of domain architecture, 2Fe-2S ferredoxin-type spans 61–163 (LKITFILKDG…GIRVALPQMT (103 aa)). The [2Fe-2S] cluster site is built by C98, C104, C107, and C144.

The protein belongs to the adrenodoxin/putidaredoxin family. In terms of assembly, interacts in its reduced state with the apo form of ISU1. It depends on [2Fe-2S] cluster as a cofactor.

The protein resides in the mitochondrion matrix. Functionally, iron-sulfur protein that transfers electrons in a wide variety of metabolic reactions. Involved in heme A biosynthesis and in iron-sulfur cluster assembly. Transfers electrons from adrenodoxin reductase ARH1 to heme A synthase COX15, a heme protein that catalyzes the conversion of heme O to heme A. Required for the de novo synthesis of Fe-S clusters on iron sulfur cluster assembly protein ISU1. Interact in its reduced state with ISU1 to productively deliver electrons for Fe-S cluster synthesis. Essential for coenzyme Q biosynthesis. May transfer the electrons required for the hydroxylation reaction performed by COQ6. This chain is Adrenodoxin homolog, mitochondrial, found in Saccharomyces cerevisiae (strain ATCC 204508 / S288c) (Baker's yeast).